Here is a 574-residue protein sequence, read N- to C-terminus: Lipase maturation factor 1 (574 aa).

Residues Met1 to Asp39 form a disordered region. The Cytoplasmic segment spans residues Met1 to Phe49. Residues Trp50–Phe72 form a helical membrane-spanning segment. The Lumenal segment spans residues Asn73 to Asp127. A helical transmembrane segment spans residues Leu128–Met151. Residues Thr152 to Leu207 lie on the Cytoplasmic side of the membrane. A helical membrane pass occupies residues Trp208–Ala221. Residues Gly222–Gly292 lie on the Lumenal side of the membrane. Residues Val293–Ala321 form a helical membrane-spanning segment. Topologically, residues Cys322–Gln367 are cytoplasmic. Residues Val368–Leu388 form a helical membrane-spanning segment. Residues Leu389 to Arg574 lie on the Lumenal side of the membrane.

Belongs to the lipase maturation factor family. Interacts with LPL and SEL1L. As to expression, expressed in all tissues synthesizing lipoprotein lipase (Lpl) and hepatic lipase (Lipc), including adipose tissue, skeletal muscle, heart, and liver. Expressed at higher levels in tissues that express little or no lipase activity such as testis and pancreas suggesting additional functions in these tissues.

Its subcellular location is the endoplasmic reticulum membrane. Functionally, involved in the maturation of specific proteins in the endoplasmic reticulum. Required for maturation and transport of active lipoprotein lipase (LPL) through the secretory pathway. Each LMF1 molecule chaperones 50 or more molecules of LPL. The sequence is that of Lipase maturation factor 1 (Lmf1) from Mus musculus (Mouse).